Reading from the N-terminus, the 180-residue chain is Small ribosomal subunit protein uS4 (180 aa).

The S4 RNA-binding domain occupies 102–174 (RRLQTMLVRK…PARKLEQKEE (73 aa)). Residues 154–180 (VPFSPLANPEHPARKLEQKEETNEESA) are disordered. Residues 164–174 (HPARKLEQKEE) show a composition bias toward basic and acidic residues.

The protein belongs to the universal ribosomal protein uS4 family. In terms of assembly, part of the 30S ribosomal subunit. Contacts protein S5. The interaction surface between S4 and S5 is involved in control of translational fidelity.

Its function is as follows. One of the primary rRNA binding proteins, it binds directly to 16S rRNA where it nucleates assembly of the body of the 30S subunit. With S5 and S12 plays an important role in translational accuracy. This chain is Small ribosomal subunit protein uS4, found in Nanoarchaeum equitans (strain Kin4-M).